The chain runs to 360 residues: Photosystem II protein D1 1 (360 aa).

3 helical membrane-spanning segments follow: residues 29–46 (YVGW…AATV), 118–133 (HFLI…QWEL), and 142–156 (WICV…SATA). Residue H118 coordinates chlorophyll a. Y126 serves as a coordination point for pheophytin a. Residues D170 and E189 each coordinate [CaMn4O5] cluster. The helical transmembrane segment at 197–218 (FHMLGVAGVFGGSLFSAMHGSL) threads the bilayer. Residue H198 coordinates chlorophyll a. A quinone is bound by residues H215 and 264–265 (SF). H215 lines the Fe cation pocket. Residue H272 coordinates Fe cation. A helical transmembrane segment spans residues 274 to 288 (FLAAWPVIGIWFTAL). [CaMn4O5] cluster is bound by residues H332, E333, D342, and A344. Positions 345–360 (AGEVAPVALTAPAING) are excised as a propeptide.

Belongs to the reaction center PufL/M/PsbA/D family. In terms of assembly, PSII is composed of 1 copy each of membrane proteins PsbA, PsbB, PsbC, PsbD, PsbE, PsbF, PsbH, PsbI, PsbJ, PsbK, PsbL, PsbM, PsbT, PsbX, PsbY, PsbZ, Psb30/Ycf12, peripheral proteins PsbO, CyanoQ (PsbQ), PsbU, PsbV and a large number of cofactors. It forms dimeric complexes. The D1/D2 heterodimer binds P680, chlorophylls that are the primary electron donor of PSII, and subsequent electron acceptors. It shares a non-heme iron and each subunit binds pheophytin, quinone, additional chlorophylls, carotenoids and lipids. D1 provides most of the ligands for the Mn4-Ca-O5 cluster of the oxygen-evolving complex (OEC). There is also a Cl(-1) ion associated with D1 and D2, which is required for oxygen evolution. The PSII complex binds additional chlorophylls, carotenoids and specific lipids. serves as cofactor. In terms of processing, tyr-161 forms a radical intermediate that is referred to as redox-active TyrZ, YZ or Y-Z. Post-translationally, C-terminally processed by CtpA; processing is essential to allow assembly of the oxygen-evolving complex and thus photosynthetic growth.

It is found in the cellular thylakoid membrane. It carries out the reaction 2 a plastoquinone + 4 hnu + 2 H2O = 2 a plastoquinol + O2. Photosystem II (PSII) is a light-driven water:plastoquinone oxidoreductase that uses light energy to abstract electrons from H(2)O, generating O(2) and a proton gradient subsequently used for ATP formation. It consists of a core antenna complex that captures photons, and an electron transfer chain that converts photonic excitation into a charge separation. The D1/D2 (PsbA/PsbD) reaction center heterodimer binds P680, the primary electron donor of PSII as well as several subsequent electron acceptors. This is Photosystem II protein D1 1 from Nostoc sp. (strain PCC 7120 / SAG 25.82 / UTEX 2576).